A 397-amino-acid chain; its full sequence is Succinate--CoA ligase [ADP-forming] subunit beta (397 aa).

An ATP-grasp domain is found at 9-253 (KEILASYGVR…IREENPIEVE (245 aa)). ATP contacts are provided by residues K50, 57–59 (GRG), V106, and E116. Residues N208 and D222 each contribute to the Mg(2+) site. Substrate contacts are provided by residues N273 and 330 to 332 (GIV).

Belongs to the succinate/malate CoA ligase beta subunit family. Heterotetramer of two alpha and two beta subunits. Requires Mg(2+) as cofactor.

It catalyses the reaction succinate + ATP + CoA = succinyl-CoA + ADP + phosphate. The enzyme catalyses GTP + succinate + CoA = succinyl-CoA + GDP + phosphate. Its pathway is carbohydrate metabolism; tricarboxylic acid cycle; succinate from succinyl-CoA (ligase route): step 1/1. In terms of biological role, succinyl-CoA synthetase functions in the citric acid cycle (TCA), coupling the hydrolysis of succinyl-CoA to the synthesis of either ATP or GTP and thus represents the only step of substrate-level phosphorylation in the TCA. The beta subunit provides nucleotide specificity of the enzyme and binds the substrate succinate, while the binding sites for coenzyme A and phosphate are found in the alpha subunit. In Flavobacterium johnsoniae (strain ATCC 17061 / DSM 2064 / JCM 8514 / BCRC 14874 / CCUG 350202 / NBRC 14942 / NCIMB 11054 / UW101) (Cytophaga johnsonae), this protein is Succinate--CoA ligase [ADP-forming] subunit beta.